We begin with the raw amino-acid sequence, 310 residues long: Ribosomal RNA small subunit methyltransferase H (310 aa).

S-adenosyl-L-methionine-binding positions include 32 to 34, Asp-52, Phe-79, Asp-100, and Gln-107; that span reads GGH.

It belongs to the methyltransferase superfamily. RsmH family.

The protein localises to the cytoplasm. The catalysed reaction is cytidine(1402) in 16S rRNA + S-adenosyl-L-methionine = N(4)-methylcytidine(1402) in 16S rRNA + S-adenosyl-L-homocysteine + H(+). Its function is as follows. Specifically methylates the N4 position of cytidine in position 1402 (C1402) of 16S rRNA. The chain is Ribosomal RNA small subunit methyltransferase H from Bacillus cereus (strain B4264).